Consider the following 174-residue polypeptide: Large ribosomal subunit protein uL16 (174 aa).

Belongs to the universal ribosomal protein uL16 family.

In Staphylothermus marinus (strain ATCC 43588 / DSM 3639 / JCM 9404 / F1), this protein is Large ribosomal subunit protein uL16.